Reading from the N-terminus, the 289-residue chain is BTB/POZ domain-containing protein KCTD7 (289 aa).

Residues M1 to G10 show a composition bias toward polar residues. The interval M1–A35 is disordered. One can recognise a BTB domain in the interval E51–G149.

Its subcellular location is the cell membrane. It localises to the cytoplasm. It is found in the cytosol. Its function is as follows. May be involved in the control of excitability of cortical neurons. The polypeptide is BTB/POZ domain-containing protein KCTD7 (KCTD7) (Gallus gallus (Chicken)).